The chain runs to 239 residues: 1-(5-phosphoribosyl)-5-[(5-phosphoribosylamino)methylideneamino] imidazole-4-carboxamide isomerase (239 aa).

The active-site Proton acceptor is Asp8. Asp130 acts as the Proton donor in catalysis.

This sequence belongs to the HisA/HisF family.

It is found in the cytoplasm. The enzyme catalyses 1-(5-phospho-beta-D-ribosyl)-5-[(5-phospho-beta-D-ribosylamino)methylideneamino]imidazole-4-carboxamide = 5-[(5-phospho-1-deoxy-D-ribulos-1-ylimino)methylamino]-1-(5-phospho-beta-D-ribosyl)imidazole-4-carboxamide. It functions in the pathway amino-acid biosynthesis; L-histidine biosynthesis; L-histidine from 5-phospho-alpha-D-ribose 1-diphosphate: step 4/9. This chain is 1-(5-phosphoribosyl)-5-[(5-phosphoribosylamino)methylideneamino] imidazole-4-carboxamide isomerase, found in Streptococcus thermophilus (strain ATCC BAA-491 / LMD-9).